A 353-amino-acid chain; its full sequence is Mitogen-activated protein kinase mpkB (353 aa).

A Protein kinase domain is found at 21–309 (YEIQDVIGEG…VEEALRHPYL (289 aa)). ATP contacts are provided by residues 27–35 (IGEGAYGVV) and Lys50. Catalysis depends on Asp145, which acts as the Proton acceptor.

The protein belongs to the protein kinase superfamily. Ser/Thr protein kinase family. MAP kinase subfamily. Mg(2+) serves as cofactor.

It localises to the nucleus. The catalysed reaction is L-seryl-[protein] + ATP = O-phospho-L-seryl-[protein] + ADP + H(+). It catalyses the reaction L-threonyl-[protein] + ATP = O-phospho-L-threonyl-[protein] + ADP + H(+). With respect to regulation, activated by threonine and tyrosine phosphorylation. Functionally, mitogen-activated protein kinase (MAPK) that plays a role in conidiation and regulation of secondary metabolite biosynthesis. Acts as a repressor of dihydroxynaphthalene (DHN)-melanin production. The sequence is that of Mitogen-activated protein kinase mpkB from Aspergillus fumigatus (strain CBS 144.89 / FGSC A1163 / CEA10) (Neosartorya fumigata).